We begin with the raw amino-acid sequence, 317 residues long: Nucleosome assembly protein 1;4 (317 aa).

Residues 52–67 carry the Nuclear export signal motif; it reads LSPKVTKRVLFLKDIQ. Residues 214-219 carry the Nuclear localization signal motif; sequence KKKTKK. Positions 297–317 are disordered; sequence ALVDEDDSDDNDDDDNDEKSD. The segment covering 298–317 has biased composition (acidic residues); sequence LVDEDDSDDNDDDDNDEKSD.

The protein belongs to the nucleosome assembly protein (NAP) family. As to quaternary structure, can form homomeric and heteromeric protein complexes with NAP1;1, NAP1;2 and NAP1;3. Binds histone H2A. Expressed in the root segment covering the apical end of the differentiation zone, the elongation zone of the root and the mature pollen within the anthers of open flowers.

It localises to the nucleus. The protein resides in the cytoplasm. Its function is as follows. May modulate chromatin structure by regulation of nucleosome assembly/disassembly. The polypeptide is Nucleosome assembly protein 1;4 (NAP1;4) (Arabidopsis thaliana (Mouse-ear cress)).